The sequence spans 339 residues: Putative zinc metalloprotease FN1322 (339 aa).

H17 lines the Zn(2+) pocket. Residue E18 is part of the active site. H21 lines the Zn(2+) pocket. Transmembrane regions (helical) follow at residues 88 to 110 (FIVL…FVTA), 262 to 284 (FGWI…LNLL), and 318 to 335 (GMIL…NDVW). The PDZ domain occupies 96-179 (FMNFLMAFIL…ITALVERNGK (84 aa)).

The protein belongs to the peptidase M50B family. Requires Zn(2+) as cofactor.

The protein localises to the cell membrane. The polypeptide is Putative zinc metalloprotease FN1322 (Fusobacterium nucleatum subsp. nucleatum (strain ATCC 25586 / DSM 15643 / BCRC 10681 / CIP 101130 / JCM 8532 / KCTC 2640 / LMG 13131 / VPI 4355)).